The primary structure comprises 430 residues: Adenylosuccinate synthetase (430 aa).

GTP is bound by residues 13 to 19 (GDEGKGK) and 41 to 43 (GHT). Catalysis depends on Asp14, which acts as the Proton acceptor. Asp14 and Gly41 together coordinate Mg(2+). IMP is bound by residues 14–17 (DEGK), 39–42 (NAGH), Thr130, Arg144, Gln225, Thr240, and Arg304. His42 functions as the Proton donor in the catalytic mechanism. 300-306 (STTGRAR) is a substrate binding site. GTP contacts are provided by residues Arg306, 332-334 (KLD), and 414-416 (STG).

It belongs to the adenylosuccinate synthetase family. As to quaternary structure, homodimer. Mg(2+) is required as a cofactor.

The protein resides in the cytoplasm. The catalysed reaction is IMP + L-aspartate + GTP = N(6)-(1,2-dicarboxyethyl)-AMP + GDP + phosphate + 2 H(+). The protein operates within purine metabolism; AMP biosynthesis via de novo pathway; AMP from IMP: step 1/2. Plays an important role in the de novo pathway of purine nucleotide biosynthesis. Catalyzes the first committed step in the biosynthesis of AMP from IMP. This is Adenylosuccinate synthetase from Pseudomonas putida (strain ATCC 700007 / DSM 6899 / JCM 31910 / BCRC 17059 / LMG 24140 / F1).